We begin with the raw amino-acid sequence, 72 residues long: Large ribosomal subunit protein uL30 (72 aa).

Belongs to the universal ribosomal protein uL30 family. Part of the 50S ribosomal subunit.

This Mycobacterium ulcerans (strain Agy99) protein is Large ribosomal subunit protein uL30.